The primary structure comprises 318 residues: NADH-ubiquinone oxidoreductase chain 1 (318 aa).

8 helical membrane-spanning segments follow: residues 2-22 (FMVNLLMLVIPVMLAMAFLTL), 71-91 (YIIAPTLALSIALIMWTPLPI), 98-118 (INLGVLFILATSSLAVYSILW), 146-166 (LAIILLCILLMSGSFTLSTLI), 171-191 (HTWLLLPSWPLAMMWFISTLA), 222-242 (LFFMAEYTNIIMMNALTATIF), 253-273 (EFFSINFTLKTLLLTTIFLWV), and 294-314 (LPLTLAMCMWHTALPIFLANI).

It belongs to the complex I subunit 1 family.

The protein resides in the mitochondrion inner membrane. The enzyme catalyses a ubiquinone + NADH + 5 H(+)(in) = a ubiquinol + NAD(+) + 4 H(+)(out). Its function is as follows. Core subunit of the mitochondrial membrane respiratory chain NADH dehydrogenase (Complex I) that is believed to belong to the minimal assembly required for catalysis. Complex I functions in the transfer of electrons from NADH to the respiratory chain. The immediate electron acceptor for the enzyme is believed to be ubiquinone. This chain is NADH-ubiquinone oxidoreductase chain 1 (MT-ND1), found in Nycticebus coucang (Slow loris).